The primary structure comprises 130 residues: Small ribosomal subunit protein uS9 (130 aa).

A disordered region spans residues 108–130 (SREKERKKYGQRGARARFQYSKR).

It belongs to the universal ribosomal protein uS9 family.

This Solidesulfovibrio magneticus (strain ATCC 700980 / DSM 13731 / RS-1) (Desulfovibrio magneticus) protein is Small ribosomal subunit protein uS9.